Reading from the N-terminus, the 306-residue chain is Protein FAM228A (306 aa).

The interval 237–277 (HASKLSQQNKGAEKKGLALGTRAQRPRSWAAADSPQGTPLV) is disordered. Serine 270 carries the post-translational modification Phosphoserine.

It belongs to the FAM228 family.

The chain is Protein FAM228A (Fam228a) from Rattus norvegicus (Rat).